Reading from the N-terminus, the 281-residue chain is LC-AMP precursor 3 (281 aa).

Positions 1–19 (MKYTIIPFLLLVALTCATA) are cleaved as a signal peptide. Positions 20–56 (RSIDGSEKEVQEIREETPSSNEDVPFSLSANEDEEAR) are excised as a propeptide. Position 74 is a leucine amide (L74). Positions 75–89 (GREESLSANEDEEAR) are excised as a propeptide. Serine amide is present on S114. The propeptide occupies 115-129 (GREESFSANEDEEER). L147 is modified (leucine amide). The propeptide occupies 148 to 162 (GREESISANEDEETR). A Leucine amide modification is found at L180. Residues 181-195 (GREESLSAIEDEEAR) constitute a propeptide that is removed on maturation. L213 carries the leucine amide modification. Residues 214 to 228 (GREESLSANEDEEAR) constitute a propeptide that is removed on maturation. L246 is subject to Leucine amide. Residues 247-261 (GREESLSANEDEEAR) constitute a propeptide that is removed on maturation. At L279 the chain carries Leucine amide.

Expressed by the venom gland.

Its subcellular location is the secreted. Antimicrobial peptide that acts by influencing bacterial cell membrane permeability at low concentrations and by directly disrupting structure-function at high concentrations. Shows activity against Gram-negative bacteria (S.typhimurium CGMCC 1.1174 (MIC=2.5 uM), E.coli CCTCC AB 2018675 (MIC=5 uM), S.dysenteriae CGMCC 1.1869 (MIC=2.5 uM), P.aeruginosa CGMCC 1.596 (MIC 5-10 uM), K.pneumoniae (MIC=10 uM), A.baumannii (MIC=5-10 uM)), and Gram-positive bacteria (S.aureus CMCC 26003 or MRSA ATCC 43300 (MIC=5 uM), and E.faecium (MIC=2.5-5 uM)). Inhibits biofilm formation of E.coli and S.aureus in a dose-dependent manner and disrupts established biofilms. Demonstrates minimal bacterial resistance, excellent stability, negligible mammalian cell toxicity, low hemolytic activity, and appropriate selectivity for both normal and tumor cells. When combined with traditional antibiotics, exhibits additive or synergistic therapeutic effects. In vivo, in a neutropenic mouse thigh infection model, exhibits a therapeutic effect in inhibiting bacterial proliferation. The chain is LC-AMP precursor 3 from Lycosa coelestis (Wolf spider).